Consider the following 99-residue polypeptide: A-type ATP synthase subunit F (99 aa).

This sequence belongs to the V-ATPase F subunit family. In terms of assembly, has multiple subunits with at least A(3), B(3), C, D, E, F, H, I and proteolipid K(x).

It is found in the cell membrane. Its function is as follows. Component of the A-type ATP synthase that produces ATP from ADP in the presence of a proton gradient across the membrane. In Methanococcus maripaludis (strain C5 / ATCC BAA-1333), this protein is A-type ATP synthase subunit F.